We begin with the raw amino-acid sequence, 351 residues long: MIENLVREEIKGFKNYEVHSIPYRYKMDANETPFELPEEVIKNIQEIVKSSQVNVYPDPTAEKLKEELARYCGVVPTNIFVGNGSDEIIHLIMLAFINKGDVVAYPHPSFAMYSVYSKIAGAVEIPVRLREDYNYDVDSFIKVIEKYQPKLVFLCNPNNPTGSVIEREDIIKIIQKSNGIVVVDEAYFEFYGNTIVDAINEFENLIVLRTLSKAFGLAGLRVGYAVANENILKYLNLVKSPYNINSLSQIIALKVLRTDVLKERINYILEERKRLIKELGKIPGVKVYPSKTNFILVKFKDADYVYQGLLERGILVRDFSKVEGLEGALRITVSSCEANDYLINGLKELLL.

K213 is subject to N6-(pyridoxal phosphate)lysine.

Belongs to the class-II pyridoxal-phosphate-dependent aminotransferase family. Histidinol-phosphate aminotransferase subfamily. As to quaternary structure, homodimer. The cofactor is pyridoxal 5'-phosphate.

It catalyses the reaction L-histidinol phosphate + 2-oxoglutarate = 3-(imidazol-4-yl)-2-oxopropyl phosphate + L-glutamate. It participates in amino-acid biosynthesis; L-histidine biosynthesis; L-histidine from 5-phospho-alpha-D-ribose 1-diphosphate: step 7/9. In Thermoanaerobacter sp. (strain X514), this protein is Histidinol-phosphate aminotransferase.